The primary structure comprises 57 residues: Potassium channel toxin gamma-KTx 2.1 (57 aa).

The N-terminal stretch at 1-21 is a signal peptide; it reads MKISFVLLLTLFICSIGWSEA. 3 disulfide bridges follow: C28/C49, C34/C54, and C38/C56.

It belongs to the short scorpion toxin superfamily. Potassium channel inhibitor family. Gamma-KTx 2 subfamily. As to expression, expressed by the venom gland.

Its subcellular location is the secreted. In terms of biological role, blocks human and/or rat Kv11.1/KCNH2/ERG1, Kv11.2/KCNH6/ERG2 and Kv11.3/KCNH7/ERG3 by binding to channel outer vestibule (S5P domain) with a 1:1 stoichiometry. Inhibition data are the following: hERG1 (reversible, Kd=7.7 nM, IC(50)=3.3 nM, IC(50)=11.9 nM), rERG1 (reversible, Kd=19 nM), hERG2 (reversible, Kd=77 nM), rERG2 (irreversible, Kd=4.2 nM), hERG3 (reversible, Kd=11.5 nM) and rERG3 (reversible, Kd=747 nM) potassium channels. Also has a minimal effect on rat ELK1/KCNH4 potassium channels (9% inhibition at 100 nM). Both this toxin and CnErgTx1 (AC Q86QT3) share mechanism of action and have overlapping binding sites on ERG1. The potency of these two toxins is not affected by elevating potassium ion concentration from 2 to 98 mM. In addition, at high toxin concentrations, block of ERG1 macroscopic currents by these two toxins is incomplete (88%). The blockade by this toxin is preferentially closed channel state-dependent, with a component of open, but not inactive state-dependent blockade. This toxin produces a concentration-dependent prolongation of QTc in the isolated rabbit heart (16.3% at 100 nM). This Mesobuthus eupeus (Lesser Asian scorpion) protein is Potassium channel toxin gamma-KTx 2.1.